Consider the following 330-residue polypeptide: Solute carrier family 25 member 16 (330 aa).

3 Solcar repeats span residues 32 to 118 (FYWL…YKTL), 126 to 214 (SGHV…LKSV), and 236 to 326 (LKTH…MKQF). 6 helical membrane passes run 33-52 (YWLR…KTTV), 95-112 (GAMM…FMAF), 132-149 (LMAG…TYPL), 189-209 (GLMP…FTFG), 242-262 (LLCG…FDVT), and 297-317 (GLYR…AVAF).

This sequence belongs to the mitochondrial carrier (TC 2.A.29) family. In terms of tissue distribution, mostly in thyroid, liver, lung, kidney and to a lesser extent in heart and skeletal muscle.

The protein resides in the mitochondrion inner membrane. Functionally, may be involved in the transport of coenzyme A in the mitochondrial matrix. Very little is known about the physiological function of this carrier. The sequence is that of Solute carrier family 25 member 16 (SLC25A16) from Bos taurus (Bovine).